The sequence spans 642 residues: Threonine--tRNA ligase (642 aa).

Residues 1–61 (MPVITLPDGS…ENDATLAIIT (61 aa)) form the TGS domain. Residues 243–534 (DHRKIGKQLD…LTEEFAGFFP (292 aa)) form a catalytic region. 3 residues coordinate Zn(2+): C334, H385, and H511.

It belongs to the class-II aminoacyl-tRNA synthetase family. As to quaternary structure, homodimer. The cofactor is Zn(2+).

It is found in the cytoplasm. The enzyme catalyses tRNA(Thr) + L-threonine + ATP = L-threonyl-tRNA(Thr) + AMP + diphosphate + H(+). Functionally, catalyzes the attachment of threonine to tRNA(Thr) in a two-step reaction: L-threonine is first activated by ATP to form Thr-AMP and then transferred to the acceptor end of tRNA(Thr). Also edits incorrectly charged L-seryl-tRNA(Thr). The sequence is that of Threonine--tRNA ligase from Salmonella dublin (strain CT_02021853).